The primary structure comprises 254 residues: Arginine transport ATP-binding protein ArgV (254 aa).

The ABC transporter domain maps to 6 to 250; that stretch reads IDAQQVCKNY…PKEQRTKDFL (245 aa). 38 to 45 contacts ATP; it reads GPSGSGKS.

It belongs to the ABC transporter superfamily. The complex is probably composed of two ATP-binding proteins (ArgV), two transmembrane proteins (ArgU) and a solute-binding protein (ArgT).

The protein resides in the cell membrane. It carries out the reaction a polar amino acid(out) + ATP + H2O = a polar amino acid(in) + ADP + phosphate + H(+). The catalysed reaction is L-arginine(out) + ATP + H2O = L-arginine(in) + ADP + phosphate + H(+). Functionally, part of the ABC transporter complex ArgTUV involved in L-arginine import. May also transport L-citrulline. Probably responsible for energy coupling to the transport system. The sequence is that of Arginine transport ATP-binding protein ArgV from Corynebacterium glutamicum (strain ATCC 13032 / DSM 20300 / JCM 1318 / BCRC 11384 / CCUG 27702 / LMG 3730 / NBRC 12168 / NCIMB 10025 / NRRL B-2784 / 534).